The following is a 374-amino-acid chain: Chaperone protein DnaJ (374 aa).

Positions 4–68 (DYYEILGVSR…EMKARFDRFG (65 aa)) constitute a J domain. A CR-type zinc finger spans residues 132-214 (GGDKELTIKH…CGGRGQKEAT (83 aa)). Zn(2+) contacts are provided by Cys-145, Cys-148, Cys-162, Cys-165, Cys-188, Cys-191, Cys-202, and Cys-205. CXXCXGXG motif repeat units follow at residues 145 to 152 (CGTCNGSG), 162 to 169 (CSTCGGTG), 188 to 195 (CPSCNGSG), and 202 to 209 (CVDCGGRG).

It belongs to the DnaJ family. In terms of assembly, homodimer. Requires Zn(2+) as cofactor.

The protein localises to the cytoplasm. Participates actively in the response to hyperosmotic and heat shock by preventing the aggregation of stress-denatured proteins and by disaggregating proteins, also in an autonomous, DnaK-independent fashion. Unfolded proteins bind initially to DnaJ; upon interaction with the DnaJ-bound protein, DnaK hydrolyzes its bound ATP, resulting in the formation of a stable complex. GrpE releases ADP from DnaK; ATP binding to DnaK triggers the release of the substrate protein, thus completing the reaction cycle. Several rounds of ATP-dependent interactions between DnaJ, DnaK and GrpE are required for fully efficient folding. Also involved, together with DnaK and GrpE, in the DNA replication of plasmids through activation of initiation proteins. The protein is Chaperone protein DnaJ of Trichodesmium erythraeum (strain IMS101).